The chain runs to 244 residues: 5-oxoprolinase subunit A (244 aa).

It belongs to the LamB/PxpA family. In terms of assembly, forms a complex composed of PxpA, PxpB and PxpC.

It catalyses the reaction 5-oxo-L-proline + ATP + 2 H2O = L-glutamate + ADP + phosphate + H(+). In terms of biological role, catalyzes the cleavage of 5-oxoproline to form L-glutamate coupled to the hydrolysis of ATP to ADP and inorganic phosphate. This chain is 5-oxoprolinase subunit A, found in Salmonella agona (strain SL483).